We begin with the raw amino-acid sequence, 220 residues long: Peritrophin-55 (220 aa).

A signal peptide spans 1–19 (MKSVFVCTLVLALAHHAFA). N29 carries N-linked (GlcNAc...) asparagine glycosylation. The Chitin-binding type-2 domain maps to 33–95 (ITPCLGNDII…NFIPAPTCEY (63 aa)). C68 and C84 form a disulfide bridge. Residues 116-165 (TTLKTTPSKTTPIVTTAPPSTPVPSTIVTNKPDPTTPKTTKPPKVTTTVN) are compositionally biased toward low complexity. The segment at 116–220 (TTLKTTPSKT…TPPSIVQLQN (105 aa)) is disordered. Residues 197-210 (PTPPGMPPTPPSFG) are compositionally biased toward pro residues.

Post-translationally, glycosylated. Larval peritrophic membrane.

Its function is as follows. May bind oligosaccharide structures. This chain is Peritrophin-55, found in Lucilia cuprina (Green bottle fly).